We begin with the raw amino-acid sequence, 508 residues long: GMP synthase [glutamine-hydrolyzing] (508 aa).

In terms of domain architecture, Glutamine amidotransferase type-1 spans 1-189; it reads MILVLDFGSQ…ALLVCGCEKT (189 aa). The active-site Nucleophile is the Cys78. Active-site residues include His163 and Glu165. The GMPS ATP-PPase domain maps to 190–383; sequence WGMQHFAQKE…LGISQDFLMR (194 aa). ATP is bound at residue 217–223; the sequence is SGGVDST.

In terms of assembly, homodimer.

It catalyses the reaction XMP + L-glutamine + ATP + H2O = GMP + L-glutamate + AMP + diphosphate + 2 H(+). Its pathway is purine metabolism; GMP biosynthesis; GMP from XMP (L-Gln route): step 1/1. Functionally, catalyzes the synthesis of GMP from XMP. The sequence is that of GMP synthase [glutamine-hydrolyzing] from Helicobacter pylori (strain Shi470).